A 470-amino-acid polypeptide reads, in one-letter code: Cysteine--tRNA ligase 1 (470 aa).

Cys-29 lines the Zn(2+) pocket. The 'HIGH' region motif lies at Pro-31 to Asn-41. Positions 221, 246, and 250 each coordinate Zn(2+). The short motif at Lys-279–Ser-283 is the 'KMSKS' region element. Lys-282 contributes to the ATP binding site.

It belongs to the class-I aminoacyl-tRNA synthetase family. As to quaternary structure, monomer. Zn(2+) serves as cofactor.

The protein localises to the cytoplasm. It carries out the reaction tRNA(Cys) + L-cysteine + ATP = L-cysteinyl-tRNA(Cys) + AMP + diphosphate. The polypeptide is Cysteine--tRNA ligase 1 (Burkholderia lata (strain ATCC 17760 / DSM 23089 / LMG 22485 / NCIMB 9086 / R18194 / 383)).